We begin with the raw amino-acid sequence, 311 residues long: Retron Ec78 reverse transcriptase (311 aa).

The Reverse transcriptase domain occupies 15-241 (DSGISAFLVT…HNRHVTGVTI (227 aa)). Mg(2+)-binding residues include D96, D187, and D188.

This sequence belongs to the bacterial reverse transcriptase family.

The catalysed reaction is DNA(n) + a 2'-deoxyribonucleoside 5'-triphosphate = DNA(n+1) + diphosphate. Functionally, reverse transcriptase (RT) component of antiviral defense system retron Ec78, composed of a non-coding RNA (ncRNA), this reverse transcriptase (RT), a probable ATPase and a putative HNH endonuclease. Expression of retron Ec78 confers protection against bacteriophage T5. At multiplicity of infection (MOI) of 0.02 cultures slow growth when infected with T5 but do not collapse, at MOI 2 cultures enter growth stasis. Responsible for synthesis of msDNA-Ec78 (a linear ssDNA with a 5'-terminal phosphate residue). Unlike most known msDNAs the mature product does not have an RNA component. The retron transcript serves as primer and template for the reaction, and codes for the RT. Not mutagenic when cloned in E.coli. It is thought to be synthesized as a branched RNA with a 2',5'-phosphodiester linkage to ssDNA; the linkage is cleaved endonucleolytically by ExoVII (xseA-xseB) leaving the observed mature 5'-ssDNA terminus. Overexpression of the ncRNA and RT, which leads to increased levels of msDNA, is not mutagenic in vivo. As the stem in the msDNA does not have a mismatch it probably does not bind or sequester MutS and/or MutL. The protein is Retron Ec78 reverse transcriptase of Escherichia coli.